A 251-amino-acid chain; its full sequence is Mycofactocin precursor peptide peptidase (251 aa).

A divalent metal cation contacts are provided by E38, H40, D49, H128, and E167.

The protein belongs to the creatininase superfamily. In terms of assembly, homooctamer. Fe(2+) is required as a cofactor. The cofactor is Zn(2+).

The catalysed reaction is [mycofactocin precursor peptide]-C-terminal glycyl-N-{5-[(4-hydroxyphenyl)methyl]-4,4-dimethyl-2-oxopyrrolidin-3-yl}acetamide + H2O = [mycofactocin precursor peptide]-C-terminal glycine + 3-amino-5-[(4-hydroxyphenyl)methyl]-4,4-dimethyl-2-pyrrolidin-2-one. Its function is as follows. Peptidase involved in the biosynthesis of the enzyme cofactor mycofactocin (MFT). Catalyzes cleavage of the MftC-modified MftA peptide to liberate its final two residues, which consist of a cross-linked valine-decarboxylated tyrosine dipeptide (named 3-amino-5-[(4-hydroxyphenyl)methyl]-4,4-dimethyl-2-pyrrolidin-2-one or ADHP). This is Mycofactocin precursor peptide peptidase (mftE) from Mycobacterium tuberculosis (strain CDC 1551 / Oshkosh).